Consider the following 59-residue polypeptide: Aedesin (59 aa).

An N-terminal signal peptide occupies residues 1-23; that stretch reads MNFTKLFAIVLLAALVLLGQTEA.

The protein belongs to the cecropin family. In terms of tissue distribution, salivary gland (at protein level).

Its subcellular location is the secreted. In terms of biological role, antimicrobial peptide. Exhibits antibacterial activity against Gram-negative bacteria, such as Escherichia coli, Pseudomonas aeruginosa, Acinetobacter baumannii and Klebsiella pneumoniae. Shows no antibacterial effects against Gram-positive bacteria, such as Staphylococcus aureus, Enterococcus faecalis and Enterococcus faecium. Exhibits antiviral activity against all four dengue virus serotypes and chikungunya virus. Exhibits leishmanicidal activity. Partially neutralizes lipopolysaccharides (LPS). Exhibits anti-inflammatory properties: inhibits LPS-induced iNOS/NOS2 transcription, nitric oxide (NO) and pro-inflammatory cytokine production in mouse macrophages and human peripheral blood mononuclear cells (PBMCs); inhibits LPS-induced activation of MAPK and NF-kappa-B signaling pathways in mouse macrophages. The sequence is that of Aedesin from Aedes aegypti (Yellowfever mosquito).